The following is a 543-amino-acid chain: Chaperonin GroEL (543 aa).

ATP is bound by residues 29 to 32, 86 to 90, Gly413, and Asp504; these read TVGP and DGTTT.

The protein belongs to the chaperonin (HSP60) family. Forms a cylinder of 14 subunits composed of two heptameric rings stacked back-to-back. Interacts with the co-chaperonin GroES.

The protein localises to the cytoplasm. It catalyses the reaction ATP + H2O + a folded polypeptide = ADP + phosphate + an unfolded polypeptide.. In terms of biological role, together with its co-chaperonin GroES, plays an essential role in assisting protein folding. The GroEL-GroES system forms a nano-cage that allows encapsulation of the non-native substrate proteins and provides a physical environment optimized to promote and accelerate protein folding. The chain is Chaperonin GroEL from Mycoplasma genitalium (strain ATCC 33530 / DSM 19775 / NCTC 10195 / G37) (Mycoplasmoides genitalium).